The sequence spans 430 residues: Glucose-1-phosphate adenylyltransferase (430 aa).

Alpha-D-glucose 1-phosphate-binding positions include glycine 163, 178–179 (EK), and serine 210.

The protein belongs to the bacterial/plant glucose-1-phosphate adenylyltransferase family. In terms of assembly, homotetramer.

The enzyme catalyses alpha-D-glucose 1-phosphate + ATP + H(+) = ADP-alpha-D-glucose + diphosphate. Its pathway is glycan biosynthesis; glycogen biosynthesis. Functionally, involved in the biosynthesis of ADP-glucose, a building block required for the elongation reactions to produce glycogen. Catalyzes the reaction between ATP and alpha-D-glucose 1-phosphate (G1P) to produce pyrophosphate and ADP-Glc. This chain is Glucose-1-phosphate adenylyltransferase, found in Synechococcus elongatus (strain ATCC 33912 / PCC 7942 / FACHB-805) (Anacystis nidulans R2).